The primary structure comprises 529 residues: Peptide chain release factor 3 (529 aa).

The 270-residue stretch at 11–280 (NKRRTFAIIS…GLTEWAPKPQ (270 aa)) folds into the tr-type G domain. GTP contacts are provided by residues 20 to 27 (SHPDAGKT), 88 to 92 (DTPGH), and 142 to 145 (NKLD).

It belongs to the TRAFAC class translation factor GTPase superfamily. Classic translation factor GTPase family. PrfC subfamily.

It is found in the cytoplasm. Functionally, increases the formation of ribosomal termination complexes and stimulates activities of RF-1 and RF-2. It binds guanine nucleotides and has strong preference for UGA stop codons. It may interact directly with the ribosome. The stimulation of RF-1 and RF-2 is significantly reduced by GTP and GDP, but not by GMP. The protein is Peptide chain release factor 3 of Mannheimia succiniciproducens (strain KCTC 0769BP / MBEL55E).